The primary structure comprises 354 residues: Guanine nucleotide-binding protein G(o) subunit alpha (354 aa).

Residue G2 is the site of N-myristoyl glycine attachment. The S-palmitoyl cysteine moiety is linked to residue C3. Residues 32–354 (KDVKLLLLGA…ANNLRGCGLY (323 aa)) enclose the G-alpha domain. Residues 35–48 (KLLLLGAGESGKST) are G1 motif. GTP contacts are provided by E43, K46, S47, T48, S152, L176, R177, T178, and R179. S47 is a binding site for Mg(2+). Residues 174–182 (DILRTRVKT) form a G2 motif region. T182 lines the Mg(2+) pocket. The tract at residues 197-206 (FRLFDVGGQR) is G3 motif. Position 205 is a 5-glutamyl histamine (Q205). A G4 motif region spans residues 266–273 (ILFLNKKD). Residues N270, D273, and C325 each coordinate GTP. A G5 motif region spans residues 324–329 (TCATDT). C351 is lipidated: S-palmitoyl cysteine.

It belongs to the G-alpha family. G(i/o/t/z) subfamily. As to quaternary structure, g proteins are composed of 3 units; alpha, beta and gamma. The alpha chain contains the guanine nucleotide binding site. Forms a complex with GNB1 and GNG3. Interacts with RGS14. Interacts with RGS16. Interacts with RGS19. Interacts (when palmitoylated) with ADGRG3. Histaminylated at Gln-205 residues by TGM2.

The protein resides in the cell membrane. Its subcellular location is the membrane. It catalyses the reaction GTP + H2O = GDP + phosphate + H(+). The GTPase activity is promoted by GTPAse activators, such as RGS14, RGS16 and RGS19. Its function is as follows. Guanine nucleotide-binding proteins (G proteins) function as transducers downstream of G protein-coupled receptors (GPCRs) in numerous signaling cascades. The alpha chain contains the guanine nucleotide binding site and alternates between an active, GTP-bound state and an inactive, GDP-bound state. Signaling by an activated GPCR promotes GDP release and GTP binding. The alpha subunit has a low GTPase activity that converts bound GTP to GDP, thereby terminating the signal. Both GDP release and GTP hydrolysis are modulated by numerous regulatory proteins. Signaling is mediated via effector proteins, such as adenylate cyclase. Inhibits adenylate cyclase activity, leading to decreased intracellular cAMP levels. This Mus musculus (Mouse) protein is Guanine nucleotide-binding protein G(o) subunit alpha (Gnao1).